The following is a 224-amino-acid chain: MQVKVIDENSNTTAVLNCAKAKTRALAWLCDTVLLAILLAIIYGISSIFIKEQSSVFLIMTVSQAVLWLTYFVILPGLWKGKTLFRALLGLSLLIFKKRFWNLLVHELFLWVWYSVIFLALAIYFFVNRDDPKILQAFFDNQNSNLSWIFVKILLSVISVLQLVFVVYFCFSSQKQALQDLLSKSFMVQKAIKVKDCKSELKSTNTIKTHSDLPGDIDLEQLGD.

Helical transmembrane passes span 25-45 (ALAW…IYGI), 56-76 (VFLI…VILP), 107-127 (ELFL…YFFV), and 149-169 (IFVK…VVYF).

It localises to the cell membrane. This is an uncharacterized protein from Mycoplasma pneumoniae (strain ATCC 29342 / M129 / Subtype 1) (Mycoplasmoides pneumoniae).